The chain runs to 175 residues: Large ribosomal subunit protein uL6 (175 aa).

It belongs to the universal ribosomal protein uL6 family. Part of the 50S ribosomal subunit.

Functionally, this protein binds to the 23S rRNA, and is important in its secondary structure. It is located near the subunit interface in the base of the L7/L12 stalk, and near the tRNA binding site of the peptidyltransferase center. This is Large ribosomal subunit protein uL6 from Xanthomonas campestris pv. campestris (strain 8004).